A 231-amino-acid polypeptide reads, in one-letter code: Large ribosomal subunit protein uL1 (231 aa).

This sequence belongs to the universal ribosomal protein uL1 family. Part of the 50S ribosomal subunit.

Functionally, binds directly to 23S rRNA. The L1 stalk is quite mobile in the ribosome, and is involved in E site tRNA release. In terms of biological role, protein L1 is also a translational repressor protein, it controls the translation of the L11 operon by binding to its mRNA. In Acinetobacter baylyi (strain ATCC 33305 / BD413 / ADP1), this protein is Large ribosomal subunit protein uL1.